Reading from the N-terminus, the 462-residue chain is Tubulin gamma-1 chain (462 aa).

142 to 148 (AGGTGSG) lines the GTP pocket.

This sequence belongs to the tubulin family.

It is found in the cytoplasm. The protein resides in the cytoskeleton. Its subcellular location is the microtubule organizing center. It localises to the centrosome. In terms of biological role, tubulin is the major constituent of microtubules. The gamma chain is found at microtubule organizing centers (MTOC) such as the spindle poles or the centrosome, suggesting that it is involved in the minus-end nucleation of microtubule assembly. This Euplotes crassus protein is Tubulin gamma-1 chain.